A 162-amino-acid polypeptide reads, in one-letter code: Mediator of RNA polymerase II transcription subunit 31 (162 aa).

Residues 131–162 (VQGGQNVEAGDTGHNEGDQGTQQDKENIALKT) are disordered. Positions 141-162 (DTGHNEGDQGTQQDKENIALKT) are enriched in basic and acidic residues.

It belongs to the Mediator complex subunit 31 family. As to quaternary structure, component of the Mediator complex.

It is found in the nucleus. In terms of biological role, component of the Mediator complex, a coactivator involved in the regulated transcription of nearly all RNA polymerase II-dependent genes. Mediator functions as a bridge to convey information from gene-specific regulatory proteins to the basal RNA polymerase II transcription machinery. Mediator is recruited to promoters by direct interactions with regulatory proteins and serves as a scaffold for the assembly of a functional preinitiation complex with RNA polymerase II and the general transcription factors. The chain is Mediator of RNA polymerase II transcription subunit 31 (soh1) from Aspergillus fumigatus (strain ATCC MYA-4609 / CBS 101355 / FGSC A1100 / Af293) (Neosartorya fumigata).